The sequence spans 408 residues: Histone acetyltransferase type B subunit 2 (408 aa).

5 WD repeats span residues 120–160, 167–207, 213–253, 255–295, and 299–339; these read KHEQ…KDHG, YHKE…NKSP, VHTD…AIQK, SVSS…KPLH, and GHED…AEQQ. An interaction with the histone H4 N-terminus region spans residues 341-345; that stretch reads DDAYD. One copy of the WD 6 repeat lies at 356 to 396; sequence GHRSPVNEFSHNSNVPWLMCSVEEENVLQIWKPANKIVRPP.

The protein belongs to the WD repeat RBAP46/RBAP48/MSI1 family. As to quaternary structure, component of the HAT-B complex composed of at least HAT1 and HAT2. The HAT-B complex binds to histone H4 tail.

It localises to the cytoplasm. It is found in the nucleus. Its function is as follows. Regulatory subunit of the histone acetylase B (HAT-B) complex. The complex acetylates 'Lys-12' of histone H4 which is required for telomeric silencing. The chain is Histone acetyltransferase type B subunit 2 (HAT2) from Kluyveromyces lactis (strain ATCC 8585 / CBS 2359 / DSM 70799 / NBRC 1267 / NRRL Y-1140 / WM37) (Yeast).